Reading from the N-terminus, the 296-residue chain is Diaminopimelate epimerase (296 aa).

Residues N17, Q49, and N69 each contribute to the substrate site. The active-site Proton donor is the C78. Substrate is bound by residues 79 to 80, N171, N205, and 223 to 224; these read GN and ER. C232 (proton acceptor) is an active-site residue. Substrate is bound at residue 233-234; the sequence is GT.

Belongs to the diaminopimelate epimerase family. Homodimer.

Its subcellular location is the cytoplasm. The enzyme catalyses (2S,6S)-2,6-diaminopimelate = meso-2,6-diaminopimelate. Its pathway is amino-acid biosynthesis; L-lysine biosynthesis via DAP pathway; DL-2,6-diaminopimelate from LL-2,6-diaminopimelate: step 1/1. Its function is as follows. Catalyzes the stereoinversion of LL-2,6-diaminopimelate (L,L-DAP) to meso-diaminopimelate (meso-DAP), a precursor of L-lysine and an essential component of the bacterial peptidoglycan. The protein is Diaminopimelate epimerase of Methylorubrum populi (strain ATCC BAA-705 / NCIMB 13946 / BJ001) (Methylobacterium populi).